The sequence spans 938 residues: Ubiquitin carboxyl-terminal hydrolase Usp2 (938 aa).

Disordered regions lie at residues 1–53, 91–117, 130–254, 273–297, 360–410, and 500–610; these read MMLD…KVGA, KVKT…NTSR, FNGN…ISTT, EQNQ…HRYP, LSGQ…NLQQ, and KDAT…EKSE. Positions 22–36 are enriched in low complexity; the sequence is STTKTSSVVATSASS. 4 stretches are compositionally biased toward low complexity: residues 137–158, 167–177, 198–227, and 275–289; these read TTTN…NTSN, STTATATSTST, MNGH…QRQQ, and NQVQ…PSSS. A compositionally biased stretch (polar residues) spans 392–410; the sequence is ASRSNHGSQAGGSSSNLQQ. 2 stretches are compositionally biased toward low complexity: residues 502–555 and 574–583; these read ATTA…TARS and TSRSSIGTSS. Basic and acidic residues predominate over residues 592–610; sequence HNSDDGYKTASSSRDEKSE. Residues 613–938 form the USP domain; sequence CGLRNIGNTC…SAYILFYERT (326 aa). The active-site Nucleophile is the Cys622. Residues Cys765, Cys768, Cys814, and Cys817 each coordinate Zn(2+). The active-site Proton acceptor is His895.

It belongs to the peptidase C19 family. As to quaternary structure, interacts (via N-terminus) with imd (via N-terminus). Interacts with Rpt6.

The enzyme catalyses Thiol-dependent hydrolysis of ester, thioester, amide, peptide and isopeptide bonds formed by the C-terminal Gly of ubiquitin (a 76-residue protein attached to proteins as an intracellular targeting signal).. Its function is as follows. Hydrolase that deubiquitinates polyubiquitinated target proteins. Required for preventing the activation of the Toll signaling cascades under unchallenged conditions. Essential for bodily calcium homeostasis. In terms of biological role, required for preventing the activation of the immune deficiency (Imd) signaling cascade under unchallenged conditions. Regulates the Imd pathway by specifically removing 'Lys-48'-linked ubiquitin from imd. Also promotes imd degradation probably by binding to imd and enhancing its association with the proteasome. In Drosophila melanogaster (Fruit fly), this protein is Ubiquitin carboxyl-terminal hydrolase Usp2.